Here is a 385-residue protein sequence, read N- to C-terminus: Succinyl-diaminopimelate desuccinylase (385 aa).

Histidine 73 contributes to the Zn(2+) binding site. Aspartate 75 is a catalytic residue. Aspartate 106 is a Zn(2+) binding site. Residue glutamate 141 is the Proton acceptor of the active site. The Zn(2+) site is built by glutamate 142, glutamate 170, and histidine 359.

The protein belongs to the peptidase M20A family. DapE subfamily. Homodimer. The cofactor is Zn(2+). Co(2+) serves as cofactor.

It catalyses the reaction N-succinyl-(2S,6S)-2,6-diaminopimelate + H2O = (2S,6S)-2,6-diaminopimelate + succinate. Its pathway is amino-acid biosynthesis; L-lysine biosynthesis via DAP pathway; LL-2,6-diaminopimelate from (S)-tetrahydrodipicolinate (succinylase route): step 3/3. In terms of biological role, catalyzes the hydrolysis of N-succinyl-L,L-diaminopimelic acid (SDAP), forming succinate and LL-2,6-diaminopimelate (DAP), an intermediate involved in the bacterial biosynthesis of lysine and meso-diaminopimelic acid, an essential component of bacterial cell walls. This chain is Succinyl-diaminopimelate desuccinylase, found in Methylorubrum extorquens (strain PA1) (Methylobacterium extorquens).